Consider the following 107-residue polypeptide: Class I hydrophobin hgfI (107 aa).

Residues 1 to 24 form the signal peptide; that stretch reads MFSKLAIFATAAFAVLAAATPVRR. Intrachain disulfides connect Cys27–Cys88, Cys34–Cys82, Cys35–Cys68, and Cys89–Cys102.

It belongs to the fungal hydrophobin family. Self-assembles to form functional amyloid fibrils called rodlets with a length range 100-150 nm. Self-assembly into fibrillar rodlets occurs spontaneously at hydrophobic:hydrophilic interfaces and the rodlets further associate laterally to form amphipathic monolayers. As to expression, only weekly expressed in hyphae cultured in liquid medium.

Its subcellular location is the secreted. The protein localises to the cell wall. In terms of biological role, aerial growth, conidiation, and dispersal of filamentous fungi in the environment rely upon a capability of their secreting small amphipathic proteins called hydrophobins (HPBs) with low sequence identity. Class I can self-assemble into an outermost layer of rodlet bundles on aerial cell surfaces, conferring cellular hydrophobicity that supports fungal growth, development and dispersal; whereas Class II form highly ordered films at water-air interfaces through intermolecular interactions but contribute nothing to the rodlet structure. HgfI is a class I hydrophobin that is involved in cell surface hydrophobicity and lowers the surface tension of water and change the nature of the surfaces to which it adsorbs. This Grifola frondosa (Maitake) protein is Class I hydrophobin hgfI.